The sequence spans 248 residues: MAQELGCRMGQVEQMIRYAYWNSKSQGIVVGVSGGVDSALAAAFCCRAIGPEKVLGLSLPASVSNPQDLSDAQELCAMLGMEHRVVLIDPMLAAFKTIPGFVETPYLLGNLMARIRMTVLYYHANRDHRLVCGTSNRSEAMLGYCTKYGDNAADFQPIVHLYKTDVYEMAKEVKIPKAILEKTPSAGLWAGQSDEGEIGLSYAEIDAALKNLEANGWKAGTPSEEKVLSRAQANAHKRLAAPNLLSVP.

31 to 38 (GVSGGVDS) is an ATP binding site. Aspartate 37 is a binding site for Mg(2+). Arginine 114 is a binding site for deamido-NAD(+). Residue threonine 134 coordinates ATP. Mg(2+) is bound at residue glutamate 139. Positions 147 and 154 each coordinate deamido-NAD(+). ATP is bound by residues lysine 163 and serine 185. 236–237 (HK) contributes to the deamido-NAD(+) binding site.

This sequence belongs to the NAD synthetase family. As to quaternary structure, homodimer.

The enzyme catalyses deamido-NAD(+) + NH4(+) + ATP = AMP + diphosphate + NAD(+) + H(+). It participates in cofactor biosynthesis; NAD(+) biosynthesis; NAD(+) from deamido-NAD(+) (ammonia route): step 1/1. Functionally, catalyzes the ATP-dependent amidation of deamido-NAD to form NAD. Uses ammonia as a nitrogen source. In Methanoregula boonei (strain DSM 21154 / JCM 14090 / 6A8), this protein is NH(3)-dependent NAD(+) synthetase.